Consider the following 441-residue polypeptide: ATP-dependent protease ATPase subunit HslU (441 aa).

ATP contacts are provided by residues isoleucine 17, 60 to 65 (GVGKTE), aspartate 253, glutamate 319, and arginine 391.

It belongs to the ClpX chaperone family. HslU subfamily. In terms of assembly, a double ring-shaped homohexamer of HslV is capped on each side by a ring-shaped HslU homohexamer. The assembly of the HslU/HslV complex is dependent on binding of ATP.

Its subcellular location is the cytoplasm. ATPase subunit of a proteasome-like degradation complex; this subunit has chaperone activity. The binding of ATP and its subsequent hydrolysis by HslU are essential for unfolding of protein substrates subsequently hydrolyzed by HslV. HslU recognizes the N-terminal part of its protein substrates and unfolds these before they are guided to HslV for hydrolysis. This is ATP-dependent protease ATPase subunit HslU from Legionella pneumophila (strain Paris).